The sequence spans 312 residues: Epoxyqueuosine reductase (312 aa).

Aspartate 132 acts as the Proton donor in catalysis. The 4Fe-4S ferredoxin-type 1 domain occupies 174–206 (EVLEADKPSKPICGECEKCIEACPTKAIEEPFI). Residues cysteine 186, cysteine 189, cysteine 192, cysteine 196, cysteine 212, cysteine 240, cysteine 243, and cysteine 247 each coordinate [4Fe-4S] cluster. In terms of domain architecture, 4Fe-4S ferredoxin-type 2 spans 226–257 (PENIINKMGNWIAGCDICQDVCPWNQKHIPST).

The protein belongs to the QueG family. Monomer. Cob(II)alamin is required as a cofactor. Requires [4Fe-4S] cluster as cofactor.

It localises to the cytoplasm. It carries out the reaction epoxyqueuosine(34) in tRNA + AH2 = queuosine(34) in tRNA + A + H2O. Its pathway is tRNA modification; tRNA-queuosine biosynthesis. In terms of biological role, catalyzes the conversion of epoxyqueuosine (oQ) to queuosine (Q), which is a hypermodified base found in the wobble positions of tRNA(Asp), tRNA(Asn), tRNA(His) and tRNA(Tyr). The sequence is that of Epoxyqueuosine reductase from Prochlorococcus marinus (strain NATL2A).